A 505-amino-acid polypeptide reads, in one-letter code: Deoxyguanosinetriphosphate triphosphohydrolase (505 aa).

In terms of domain architecture, HD spans R66 to C273.

The protein belongs to the dGTPase family. Type 1 subfamily. As to quaternary structure, homotetramer. It depends on Mg(2+) as a cofactor.

The enzyme catalyses dGTP + H2O = 2'-deoxyguanosine + triphosphate + H(+). In terms of biological role, dGTPase preferentially hydrolyzes dGTP over the other canonical NTPs. This is Deoxyguanosinetriphosphate triphosphohydrolase from Escherichia coli (strain K12 / MC4100 / BW2952).